A 205-amino-acid chain; its full sequence is Dr1-associated corepressor (205 aa).

Positions 14-77 (PARIKKIMQT…SHLKQCIELE (64 aa)) constitute a Histone-fold domain. The disordered stretch occupies residues 91-205 (PDMQGDGEDN…EAEDEEDYDS (115 aa)). A compositionally biased stretch (basic and acidic residues) spans 98–108 (EDNHTDGDKGP). The span at 138 to 155 (SEQEDESEDTDTDGEEET) shows a compositional bias: acidic residues. Pro residues predominate over residues 172–193 (PPTPFMPFTSPLPLPPAPPGPS). A compositionally biased stretch (acidic residues) spans 196-205 (EAEDEEDYDS).

This sequence belongs to the NC2 alpha/DRAP1 family. As to quaternary structure, heterodimer with DR1. Binds BTAF1. Phosphorylation reduces DNA binding, but has no effect on heterodimerization and TBP binding.

The protein resides in the nucleus. In terms of biological role, the association of the DR1/DRAP1 heterodimer with TBP results in a functional repression of both activated and basal transcription of class II genes. This interaction precludes the formation of a transcription-competent complex by inhibiting the association of TFIIA and/or TFIIB with TBP. Can bind to DNA on its own. The chain is Dr1-associated corepressor from Rattus norvegicus (Rat).